We begin with the raw amino-acid sequence, 243 residues long: 4-hydroxy-tetrahydrodipicolinate reductase (243 aa).

NAD(+)-binding positions include 9-14 (GANGKM), 78-80 (GTS), and 104-107 (APNF). Histidine 134 serves as the catalytic Proton donor/acceptor. Histidine 135 is a (S)-2,3,4,5-tetrahydrodipicolinate binding site. Lysine 138 functions as the Proton donor in the catalytic mechanism. 144–145 (GT) provides a ligand contact to (S)-2,3,4,5-tetrahydrodipicolinate.

Belongs to the DapB family.

It is found in the cytoplasm. The catalysed reaction is (S)-2,3,4,5-tetrahydrodipicolinate + NAD(+) + H2O = (2S,4S)-4-hydroxy-2,3,4,5-tetrahydrodipicolinate + NADH + H(+). The enzyme catalyses (S)-2,3,4,5-tetrahydrodipicolinate + NADP(+) + H2O = (2S,4S)-4-hydroxy-2,3,4,5-tetrahydrodipicolinate + NADPH + H(+). The protein operates within amino-acid biosynthesis; L-lysine biosynthesis via DAP pathway; (S)-tetrahydrodipicolinate from L-aspartate: step 4/4. Functionally, catalyzes the conversion of 4-hydroxy-tetrahydrodipicolinate (HTPA) to tetrahydrodipicolinate. The sequence is that of 4-hydroxy-tetrahydrodipicolinate reductase from Legionella pneumophila (strain Lens).